We begin with the raw amino-acid sequence, 79 residues long: Acyl carrier protein (79 aa).

Residues 2–77 (ESIEQRVKKI…QAVDYINSHG (76 aa)) form the Carrier domain. Ser-37 is subject to O-(pantetheine 4'-phosphoryl)serine.

The protein belongs to the acyl carrier protein (ACP) family. 4'-phosphopantetheine is transferred from CoA to a specific serine of apo-ACP by AcpS. This modification is essential for activity because fatty acids are bound in thioester linkage to the sulfhydryl of the prosthetic group.

It is found in the cytoplasm. Its pathway is lipid metabolism; fatty acid biosynthesis. Its function is as follows. Carrier of the growing fatty acid chain in fatty acid biosynthesis. This Bordetella parapertussis (strain 12822 / ATCC BAA-587 / NCTC 13253) protein is Acyl carrier protein.